Here is a 471-residue protein sequence, read N- to C-terminus: Pancreatic lipase-related protein 2 (471 aa).

Positions 1–17 (MLPSWTIGLLLLATVRG) are cleaved as a signal peptide. An intrachain disulfide couples cysteine 21 to cysteine 27. Asparagine 71 carries N-linked (GlcNAc...) asparagine glycosylation. Residues 93 to 105 (IHGFIDKGEDSWP) form a required for galactolipase activity region. A disulfide bond links cysteine 109 and cysteine 120. Serine 171 acts as the Nucleophile in catalysis. The active-site Charge relay system is the aspartate 195. Residues glutamate 206, arginine 209, aspartate 211, and aspartate 214 each coordinate Ca(2+). A disulfide bridge connects residues cysteine 256 and cysteine 280. The interval 257-279 (QKNTLSTIVDVDGIWEGIEDFAA) is required for galactolipase activity. Catalysis depends on histidine 282, which acts as the Charge relay system. 2 cysteine pairs are disulfide-bonded: cysteine 304-cysteine 317 and cysteine 320-cysteine 325. N-linked (GlcNAc...) asparagine glycosylation is present at asparagine 355. A PLAT domain is found at 359 to 471 (WRYRVSVTLA…ENILQTLNPC (113 aa)). A disulfide bond links cysteine 455 and cysteine 471.

It belongs to the AB hydrolase superfamily. Lipase family.

The protein resides in the secreted. It is found in the zymogen granule membrane. The protein localises to the cell projection. Its subcellular location is the neuron projection. It carries out the reaction a triacylglycerol + H2O = a diacylglycerol + a fatty acid + H(+). It catalyses the reaction a 1,2-diacyl-3-O-(beta-D-galactosyl)-sn-glycerol + 2 H2O = 3-beta-D-galactosyl-sn-glycerol + 2 a fatty acid + 2 H(+). The enzyme catalyses 1,2,3-tri-(9Z-octadecenoyl)-glycerol + H2O = di-(9Z)-octadecenoylglycerol + (9Z)-octadecenoate + H(+). The catalysed reaction is di-(9Z)-octadecenoylglycerol + H2O = (9Z-octadecenoyl)-glycerol + (9Z)-octadecenoate + H(+). It carries out the reaction (9Z-octadecenoyl)-glycerol + H2O = glycerol + (9Z)-octadecenoate + H(+). It catalyses the reaction 1-(9Z-octadecenoyl)-glycerol + H2O = glycerol + (9Z)-octadecenoate + H(+). The enzyme catalyses 1,2,3-tripropanoylglycerol + H2O = dipropanoylglycerol + propanoate + H(+). The catalysed reaction is 1,2,3-tributanoylglycerol + H2O = dibutanoylglycerol + butanoate + H(+). It carries out the reaction 1,2,3-trioctanoylglycerol + H2O = dioctanoylglycerol + octanoate + H(+). It catalyses the reaction 1,2-didecanoylglycerol + H2O = decanoylglycerol + decanoate + H(+). The enzyme catalyses long chain 1,2-diacyl-3-O-beta-D-galactosyl-sn-glycerol + H2O = long chain acyl-3-O-beta-D-galactosyl-sn-glycerol + a fatty acid + H(+). The catalysed reaction is 1,2-dioctanoyl-3-O-beta-D-galactosyl-sn-glycerol + H2O = octanoyl-3-(beta-D-galactosyl)-sn-glycerol + octanoate + H(+). It carries out the reaction 1,2-didodecanoyl-3-beta-D-galactosyl-sn-glycerol + H2O = dodecanoyl-3-beta-D-galactosyl-sn-glycerol + dodecanoate + H(+). It catalyses the reaction 1-beta-D-galactosyl-2,3-didodecanoyl-sn-glycerol + H2O = 1-beta-D-galactosyl-dodecanoyl-sn-glycerol + dodecanoate + H(+). The enzyme catalyses a 1,2-diacyl-3-O-[alpha-D-galactosyl-(1-&gt;6)-beta-D-galactosyl]-sn-glycerol + H2O = acyl-3-O-[alpha-D-galactosyl-(1-&gt;6)-beta-D-galactosyl]-sn-glycerol + a fatty acid + H(+). The catalysed reaction is long chain 1,2-diacyl-3-O-[alpha-D-galactosyl-(1-&gt;6)-beta-D-galactosyl]-sn-glycerol + H2O = long chain acyl-3-O-[alpha-D-galactosyl-(1-&gt;6)-beta-D-galactosyl]-sn-glycerol + a fatty acid + H(+). It carries out the reaction 1,2-dioctanoyl-3-O-[alpha-D-galactosyl-(1-&gt;6)-beta-D-galactosyl]-sn-glycerol + H2O = octanoyl-3-O-[alpha-D-galactosyl-(1-&gt;6)-beta-D-galactosyl]-sn-glycerol + octanoate + H(+). It catalyses the reaction 1,2-didodecanoyl-3-O-[alpha-D-galactosyl-(1-&gt;6)-beta-D-galactosyl]-sn-glycerol + H2O = dodecanoyl-3-O-[alpha-D-galactosyl-(1-&gt;6)-beta-D-galactosyl]-sn-glycerol + dodecanoate + H(+). The enzyme catalyses a 1,2-diacyl-sn-glycero-3-phosphocholine + H2O = a monoacyl-sn-glycero-3-phosphocholine + a fatty acid + H(+). It participates in glycerolipid metabolism; triacylglycerol degradation. Its pathway is glycolipid metabolism. Its activity is regulated as follows. Up-regulated by CLPS in the presence of increasing concentrations of bile salts. Its function is as follows. Lipase that primarily hydrolyzes triglycerides and galactosylglycerides. In neonates, may play a major role in pancreatic digestion of dietary fats such as milk fat globules enriched in long-chain triglycerides. Hydrolyzes short-, medium- and long-chain fatty acyls in triglycerides without apparent positional specificity. Can completely deacylate triacylglycerols. When the liver matures and bile salt synthesis increases, likely functions mainly as a galactolipase and monoacylglycerol lipase. Hydrolyzes monogalactosyldiglycerols (MGDG) and digalactosyldiacylglycerols (DGDG) present in a plant-based diet, releasing long-chain polyunsaturated fatty acids. Hydrolyzes medium- and long-chain fatty acyls in galactolipids. May act together with LIPF to hydrolyze partially digested triglycerides. Hydrolyzes long-chain monoglycerides with high efficiency. In cytotoxic T cells, contributes to perforin-dependent cell lysis, but is unlikely to mediate direct cytotoxicity. Also has low phospholipase activity. In neurons, required for the localization of the phospholipid 1-oleoyl-2-palmitoyl-PC (OPPC) to neurite tips through acyl chain remodeling of membrane phospholipids. The resulting OPPC-rich lipid membrane domain recruits the t-SNARE protein STX4 by selectively interacting with the STX4 transmembrane domain and this promotes surface expression of the dopamine transporter SLC6A3/DAT at neurite tips by facilitating fusion of SLC6A3-containing transport vesicles with the plasma membrane. In Sus scrofa (Pig), this protein is Pancreatic lipase-related protein 2 (PNLIPRP2).